Reading from the N-terminus, the 199-residue chain is NADH-quinone oxidoreductase subunit C (199 aa).

This sequence belongs to the complex I 30 kDa subunit family. In terms of assembly, NDH-1 is composed of 14 different subunits. Subunits NuoB, C, D, E, F, and G constitute the peripheral sector of the complex.

It localises to the cell inner membrane. It carries out the reaction a quinone + NADH + 5 H(+)(in) = a quinol + NAD(+) + 4 H(+)(out). Functionally, NDH-1 shuttles electrons from NADH, via FMN and iron-sulfur (Fe-S) centers, to quinones in the respiratory chain. The immediate electron acceptor for the enzyme in this species is believed to be ubiquinone. Couples the redox reaction to proton translocation (for every two electrons transferred, four hydrogen ions are translocated across the cytoplasmic membrane), and thus conserves the redox energy in a proton gradient. This chain is NADH-quinone oxidoreductase subunit C, found in Polynucleobacter necessarius subsp. necessarius (strain STIR1).